We begin with the raw amino-acid sequence, 330 residues long: Ketol-acid reductoisomerase (NADP(+)) (330 aa).

The region spanning 1-181 (MKVFYDSDFK…GLSRAGVIQT (181 aa)) is the KARI N-terminal Rossmann domain. NADP(+)-binding positions include 24–27 (YGSQ), Arg-47, Ser-52, and 82–85 (DELQ). Residue His-107 is part of the active site. Gly-133 contacts NADP(+). One can recognise a KARI C-terminal knotted domain in the interval 182–327 (TFKEETETDL…AKLRKMCGLE (146 aa)). 4 residues coordinate Mg(2+): Asp-190, Glu-194, Glu-226, and Glu-230. Position 251 (Ser-251) interacts with substrate.

The protein belongs to the ketol-acid reductoisomerase family. Mg(2+) serves as cofactor.

The enzyme catalyses (2R)-2,3-dihydroxy-3-methylbutanoate + NADP(+) = (2S)-2-acetolactate + NADPH + H(+). The catalysed reaction is (2R,3R)-2,3-dihydroxy-3-methylpentanoate + NADP(+) = (S)-2-ethyl-2-hydroxy-3-oxobutanoate + NADPH + H(+). The protein operates within amino-acid biosynthesis; L-isoleucine biosynthesis; L-isoleucine from 2-oxobutanoate: step 2/4. It participates in amino-acid biosynthesis; L-valine biosynthesis; L-valine from pyruvate: step 2/4. Functionally, involved in the biosynthesis of branched-chain amino acids (BCAA). Catalyzes an alkyl-migration followed by a ketol-acid reduction of (S)-2-acetolactate (S2AL) to yield (R)-2,3-dihydroxy-isovalerate. In the isomerase reaction, S2AL is rearranged via a Mg-dependent methyl migration to produce 3-hydroxy-3-methyl-2-ketobutyrate (HMKB). In the reductase reaction, this 2-ketoacid undergoes a metal-dependent reduction by NADPH to yield (R)-2,3-dihydroxy-isovalerate. The protein is Ketol-acid reductoisomerase (NADP(+)) of Methanococcus maripaludis (strain C5 / ATCC BAA-1333).